Consider the following 169-residue polypeptide: Cytochrome c oxidase subunit 4 isoform 1, mitochondrial (169 aa).

A mitochondrion-targeting transit peptide spans Met1–Arg22. Residues Ala23–Asn98 lie on the Mitochondrial matrix side of the membrane. The residue at position 29 (Lys29) is an N6-acetyllysine; alternate. Lys29 is modified (N6-succinyllysine; alternate). Lys53 carries the N6-acetyllysine modification. Ser56 and Ser58 each carry phosphoserine. Residue Lys60 is modified to N6-acetyllysine; alternate. N6-succinyllysine; alternate is present on Lys60. An N6-acetyllysine modification is found at Lys67. The chain crosses the membrane as a helical span at residues Glu99 to Tyr124. Residues Val125–Lys169 lie on the Mitochondrial intermembrane side of the membrane.

The protein belongs to the cytochrome c oxidase IV family. Component of the cytochrome c oxidase (complex IV, CIV), a multisubunit enzyme composed of 14 subunits. The complex is composed of a catalytic core of 3 subunits MT-CO1, MT-CO2 and MT-CO3, encoded in the mitochondrial DNA, and 11 supernumerary subunits COX4I1 (or COX4I2), COX5A, COX5B, COX6A1 (or COX6A2), COX6B1 (or COX6B2), COX6C, COX7A2 (or COX7A1), COX7B, COX7C, COX8A and NDUFA4, which are encoded in the nuclear genome. The complex exists as a monomer or a dimer and forms supercomplexes (SCs) in the inner mitochondrial membrane with NADH-ubiquinone oxidoreductase (complex I, CI) and ubiquinol-cytochrome c oxidoreductase (cytochrome b-c1 complex, complex III, CIII), resulting in different assemblies (supercomplex SCI(1)III(2)IV(1) and megacomplex MCI(2)III(2)IV(2)). Interacts with AFG1L. Interacts with PHB2; the interaction decreases in absence of SPHK2. Interacts with ABCB7; this interaction allows the regulation of cellular iron homeostasis and cellular reactive oxygen species (ROS) levels in cardiomyocytes. Interacts with FLVCR2; this interaction occurs in the absence of heme and is disrupted upon heme binding. Interacts with IRGC. In terms of tissue distribution, ubiquitous.

The protein localises to the mitochondrion inner membrane. The protein operates within energy metabolism; oxidative phosphorylation. Functionally, component of the cytochrome c oxidase, the last enzyme in the mitochondrial electron transport chain which drives oxidative phosphorylation. The respiratory chain contains 3 multisubunit complexes succinate dehydrogenase (complex II, CII), ubiquinol-cytochrome c oxidoreductase (cytochrome b-c1 complex, complex III, CIII) and cytochrome c oxidase (complex IV, CIV), that cooperate to transfer electrons derived from NADH and succinate to molecular oxygen, creating an electrochemical gradient over the inner membrane that drives transmembrane transport and the ATP synthase. Cytochrome c oxidase is the component of the respiratory chain that catalyzes the reduction of oxygen to water. Electrons originating from reduced cytochrome c in the intermembrane space (IMS) are transferred via the dinuclear copper A center (CU(A)) of subunit 2 and heme A of subunit 1 to the active site in subunit 1, a binuclear center (BNC) formed by heme A3 and copper B (CU(B)). The BNC reduces molecular oxygen to 2 water molecules using 4 electrons from cytochrome c in the IMS and 4 protons from the mitochondrial matrix. The chain is Cytochrome c oxidase subunit 4 isoform 1, mitochondrial from Homo sapiens (Human).